The sequence spans 179 residues: Large ribosomal subunit protein uL5 (179 aa).

It belongs to the universal ribosomal protein uL5 family. In terms of assembly, part of the 50S ribosomal subunit; part of the 5S rRNA/L5/L18/L25 subcomplex. Contacts the 5S rRNA and the P site tRNA. Forms a bridge to the 30S subunit in the 70S ribosome.

This is one of the proteins that bind and probably mediate the attachment of the 5S RNA into the large ribosomal subunit, where it forms part of the central protuberance. In the 70S ribosome it contacts protein S13 of the 30S subunit (bridge B1b), connecting the 2 subunits; this bridge is implicated in subunit movement. Contacts the P site tRNA; the 5S rRNA and some of its associated proteins might help stabilize positioning of ribosome-bound tRNAs. This chain is Large ribosomal subunit protein uL5, found in Vibrio parahaemolyticus serotype O3:K6 (strain RIMD 2210633).